The primary structure comprises 179 residues: Fas apoptotic inhibitory molecule 1 (179 aa).

At T2 the chain carries N-acetylthreonine.

This sequence belongs to the FAIM1 family.

It localises to the cytoplasm. Its function is as follows. Plays a role as an inducible effector molecule that mediates Fas resistance produced by surface Ig engagement in B cells. This Homo sapiens (Human) protein is Fas apoptotic inhibitory molecule 1 (FAIM).